A 260-amino-acid chain; its full sequence is Ribosomal RNA small subunit methyltransferase J (260 aa).

S-adenosyl-L-methionine is bound by residues 125–126 (ER) and Asp179. Residues 234-260 (IDGPKPSHALDGKSSRYDIYPKKALKP) form a disordered region. Residues 241-254 (HALDGKSSRYDIYP) are compositionally biased toward basic and acidic residues.

Belongs to the methyltransferase superfamily. RsmJ family.

The protein resides in the cytoplasm. The catalysed reaction is guanosine(1516) in 16S rRNA + S-adenosyl-L-methionine = N(2)-methylguanosine(1516) in 16S rRNA + S-adenosyl-L-homocysteine + H(+). Specifically methylates the guanosine in position 1516 of 16S rRNA. In Pseudomonas fluorescens (strain SBW25), this protein is Ribosomal RNA small subunit methyltransferase J.